A 62-amino-acid chain; its full sequence is Prokaryotic ubiquitin-like protein Pup (62 aa).

The disordered stretch occupies residues 1-29 (MSQQSLNAPGPGAEDGNDPEAVTGGQTFA). An ARC ATPase binding region spans residues 21 to 56 (AVTGGQTFASAQAADDLLDEIDSVLESNAETFVRSF). The residue at position 62 (Q62) is a Deamidated glutamine. An Isoglutamyl lysine isopeptide (Gln-Lys) (interchain with K-? in acceptor proteins) cross-link involves residue Q62.

The protein belongs to the prokaryotic ubiquitin-like protein family. Strongly interacts with the proteasome-associated ATPase ARC through a hydrophobic interface; the interacting region of Pup lies in its C-terminal half. There is one Pup binding site per ARC hexamer ring. Post-translationally, is modified by deamidation of its C-terminal glutamine to glutamate by the deamidase Dop, a prerequisite to the subsequent pupylation process.

The protein operates within protein degradation; proteasomal Pup-dependent pathway. Its function is as follows. Protein modifier that is covalently attached to lysine residues of substrate proteins, thereby targeting them for proteasomal degradation. The tagging system is termed pupylation. The sequence is that of Prokaryotic ubiquitin-like protein Pup from Brachybacterium faecium (strain ATCC 43885 / DSM 4810 / JCM 11609 / LMG 19847 / NBRC 14762 / NCIMB 9860 / 6-10).